The primary structure comprises 378 residues: Biotin synthase (378 aa).

One can recognise a Radical SAM core domain in the interval 68–292 (NEVQISTLLS…IAVTRICCPS (225 aa)). Residues Cys-83, Cys-87, and Cys-90 each contribute to the [4Fe-4S] cluster site. Cys-129, Cys-160, Cys-220, and Arg-296 together coordinate [2Fe-2S] cluster.

This sequence belongs to the radical SAM superfamily. Biotin synthase family. In terms of assembly, homodimer. [4Fe-4S] cluster is required as a cofactor. Requires [2Fe-2S] cluster as cofactor.

It catalyses the reaction (4R,5S)-dethiobiotin + (sulfur carrier)-SH + 2 reduced [2Fe-2S]-[ferredoxin] + 2 S-adenosyl-L-methionine = (sulfur carrier)-H + biotin + 2 5'-deoxyadenosine + 2 L-methionine + 2 oxidized [2Fe-2S]-[ferredoxin]. Its pathway is cofactor biosynthesis; biotin biosynthesis; biotin from 7,8-diaminononanoate: step 2/2. Functionally, catalyzes the conversion of dethiobiotin (DTB) to biotin by the insertion of a sulfur atom into dethiobiotin via a radical-based mechanism. The sequence is that of Biotin synthase from Psychrobacter arcticus (strain DSM 17307 / VKM B-2377 / 273-4).